Reading from the N-terminus, the 326-residue chain is tRNA-modifying protein YgfZ (326 aa).

Residues W27 and W189 each contribute to the folate site.

The protein belongs to the tRNA-modifying YgfZ family.

The protein resides in the cytoplasm. In terms of biological role, folate-binding protein involved in regulating the level of ATP-DnaA and in the modification of some tRNAs. It is probably a key factor in regulatory networks that act via tRNA modification, such as initiation of chromosomal replication. The protein is tRNA-modifying protein YgfZ of Escherichia coli O6:K15:H31 (strain 536 / UPEC).